Reading from the N-terminus, the 93-residue chain is Pyrimidine/purine nucleoside phosphorylase (93 aa).

The protein belongs to the nucleoside phosphorylase PpnP family.

The enzyme catalyses a purine D-ribonucleoside + phosphate = a purine nucleobase + alpha-D-ribose 1-phosphate. It catalyses the reaction adenosine + phosphate = alpha-D-ribose 1-phosphate + adenine. It carries out the reaction cytidine + phosphate = cytosine + alpha-D-ribose 1-phosphate. The catalysed reaction is guanosine + phosphate = alpha-D-ribose 1-phosphate + guanine. The enzyme catalyses inosine + phosphate = alpha-D-ribose 1-phosphate + hypoxanthine. It catalyses the reaction thymidine + phosphate = 2-deoxy-alpha-D-ribose 1-phosphate + thymine. It carries out the reaction uridine + phosphate = alpha-D-ribose 1-phosphate + uracil. The catalysed reaction is xanthosine + phosphate = alpha-D-ribose 1-phosphate + xanthine. Its function is as follows. Catalyzes the phosphorolysis of diverse nucleosides, yielding D-ribose 1-phosphate and the respective free bases. Can use uridine, adenosine, guanosine, cytidine, thymidine, inosine and xanthosine as substrates. Also catalyzes the reverse reactions. The chain is Pyrimidine/purine nucleoside phosphorylase from Tolumonas auensis (strain DSM 9187 / NBRC 110442 / TA 4).